The chain runs to 303 residues: MSQIDKMAKIKKLREISDAPFVDCKKALENSDYDIDLAINWLNKNGKSKALKKSDRIAAEGLVLAKKDANSVLVFELNSETDFVAKNQNFINLQQKIGELLLANDFVNLEDALLIQDEAGRSISELMILATATIGEKITLRRVFKTKYSLEQSVEVYTHSNGQIAVITILKGGNLEIAKNISMHVAALNPQYILKVEVPNEKLQEIQLEVEKKAFAEVKNFEKKPENVRVGILKGMIDKQLSEFVLELQPLATDSAVTVEKYLAQNSATLEKVVRFEVGEGIQKQNVDFSAEVNQQIQEFQKK.

The interval 81 to 84 is involved in Mg(2+) ion dislocation from EF-Tu; sequence TDFV.

It belongs to the EF-Ts family.

It is found in the cytoplasm. In terms of biological role, associates with the EF-Tu.GDP complex and induces the exchange of GDP to GTP. It remains bound to the aminoacyl-tRNA.EF-Tu.GTP complex up to the GTP hydrolysis stage on the ribosome. The protein is Elongation factor Ts of Mesomycoplasma hyopneumoniae (strain 232) (Mycoplasma hyopneumoniae).